The primary structure comprises 240 residues: MSKAGGNKGGSRTGGRGGAGSSNLHVRVKKKAGTIKESSRRWLERHLNDPYVHKSRQDGYRSRAAYKLIEINDRYNLLKKGQKIIDLGAAPGGWSQIAARIVGSTDENPQVVGIDYLHVDPLPGVILLEMDFLDDEAPQKLMDALGDKPDLVISDMAAPTTGHRRTDHLRTVHLCEVAADFAVSVLKPGGHFLTKTFQGGTENELLALLKQKFRSVHHVKPPASRAESVELYLLARDFKG.

Residues 1–20 (MSKAGGNKGGSRTGGRGGAG) are compositionally biased toward gly residues. The tract at residues 1–33 (MSKAGGNKGGSRTGGRGGAGSSNLHVRVKKKAG) is disordered. Residues glycine 92, tryptophan 94, aspartate 115, aspartate 131, and aspartate 155 each contribute to the S-adenosyl-L-methionine site. Lysine 195 functions as the Proton acceptor in the catalytic mechanism.

This sequence belongs to the class I-like SAM-binding methyltransferase superfamily. RNA methyltransferase RlmE family.

The protein resides in the cytoplasm. The enzyme catalyses uridine(2552) in 23S rRNA + S-adenosyl-L-methionine = 2'-O-methyluridine(2552) in 23S rRNA + S-adenosyl-L-homocysteine + H(+). In terms of biological role, specifically methylates the uridine in position 2552 of 23S rRNA at the 2'-O position of the ribose in the fully assembled 50S ribosomal subunit. This is Ribosomal RNA large subunit methyltransferase E from Brucella abortus (strain S19).